The following is a 127-amino-acid chain: Ribosome-binding factor A (127 aa).

It belongs to the RbfA family. In terms of assembly, monomer. Binds 30S ribosomal subunits, but not 50S ribosomal subunits or 70S ribosomes.

It localises to the cytoplasm. Its function is as follows. One of several proteins that assist in the late maturation steps of the functional core of the 30S ribosomal subunit. Associates with free 30S ribosomal subunits (but not with 30S subunits that are part of 70S ribosomes or polysomes). Required for efficient processing of 16S rRNA. May interact with the 5'-terminal helix region of 16S rRNA. This chain is Ribosome-binding factor A, found in Rickettsia typhi (strain ATCC VR-144 / Wilmington).